The following is a 257-amino-acid chain: uncharacterized protein (257 aa).

A signal peptide spans 1–22; sequence MIHSRKLRLWLYLVLLAVFIGA. Cys-23 is lipidated: N-palmitoyl cysteine. The S-diacylglycerol cysteine moiety is linked to residue Cys-23.

This sequence belongs to the staphylococcal tandem lipoprotein family.

The protein localises to the cell membrane. This is an uncharacterized protein from Staphylococcus aureus (strain Mu50 / ATCC 700699).